A 229-amino-acid polypeptide reads, in one-letter code: Probable coenzyme A transferase subunit alpha (229 aa).

Gly-26 to Gly-32 provides a ligand contact to CoA.

It belongs to the 3-oxoacid CoA-transferase subunit A family. In terms of assembly, heterodimer of a subunit alpha and a subunit beta.

The protein is Probable coenzyme A transferase subunit alpha (yodS) of Bacillus subtilis (strain 168).